The chain runs to 149 residues: MGAFDYISSFCSYTYANAKTKRKPLQTVDIKVKMDCDGCERRVRNVVRRMKGVKSVEVNRKQSRITVNGHVDPNKVLKRVKSTGKKAEFWPYIPQHMVYYPFAPGMYDKRAPAGHIRNPTQSFPTANAPEENYVSLFSDDNVHAACSIM.

Residues 25 to 88 (LQTVDIKVKM…RVKSTGKKAE (64 aa)) form the HMA domain. A metal cation-binding residues include Cys36 and Cys39. At Cys146 the chain carries Cysteine methyl ester. Cys146 carries S-farnesyl cysteine lipidation. Residues 147 to 149 (SIM) constitute a propeptide, removed in mature form.

The protein belongs to the HIPP family. Interacts with ZHD11/HB29. Expressed at low levels in leaves and sepals.

The protein localises to the membrane. Its function is as follows. Heavy-metal-binding protein. Binds cadmium. May be involved in cadmium transport and play a role in cadmium detoxification. The polypeptide is Heavy metal-associated isoprenylated plant protein 21 (Arabidopsis thaliana (Mouse-ear cress)).